The sequence spans 440 residues: Putative F-box/LRR-repeat protein At5g15620 (440 aa).

The 52-residue stretch at 1 to 52 (MDRFSNLPDDVIYHIVSFLSAKEATCLKFVSKNFQNLVTIKRNVVFHHWESF) folds into the F-box domain. LRR repeat units lie at residues 4-31 (FSNL…KFVS), 126-153 (LKLG…ILDS), 156-181 (FYAS…VIDR), 194-205 (SSPTLKRLTLRR), 210-235 (PEPE…KYKD), 264-289 (YWLN…SIKV), and 318-343 (EADF…TIEG).

This Arabidopsis thaliana (Mouse-ear cress) protein is Putative F-box/LRR-repeat protein At5g15620.